We begin with the raw amino-acid sequence, 394 residues long: 4-hydroxybenzoate 3-monooxygenase (NAD(P)H) (394 aa).

FAD contacts are provided by residues E32, 42-47 (TIRAGV), and Q102. Substrate-binding positions include Y203, 214–216 (STR), and Y224. D288 contributes to the FAD binding site. P295 serves as a coordination point for substrate. Position 301–302 (301–302 (LN)) interacts with FAD.

It belongs to the aromatic-ring hydroxylase family. FAD is required as a cofactor.

It carries out the reaction 4-hydroxybenzoate + NADH + O2 + H(+) = 3,4-dihydroxybenzoate + NAD(+) + H2O. It catalyses the reaction 4-hydroxybenzoate + NADPH + O2 + H(+) = 3,4-dihydroxybenzoate + NADP(+) + H2O. In terms of biological role, involved in the degradation of 4-hydroxybenzoate (4HB) via the protocatechuate (PCA) 2,3-cleavage pathway. Catalyzes the conversion of 4HB into 2-hydroxypenta-2,4-dienoate (HPD). It is highly specific for 4-hydroxybenzoate, and is able to utilize both NADH and NADPH as electron donors at approximately equal rates. This Paenibacillus sp protein is 4-hydroxybenzoate 3-monooxygenase (NAD(P)H) (praI).